A 792-amino-acid chain; its full sequence is Kinesin-related protein 2 (792 aa).

2 disordered regions span residues 22–50 (TINSRPSLLRKPASSSSQSNDRISYPPST) and 162–183 (NNININSNNSSNSNNNILSPVQ). The span at 34 to 50 (ASSSSQSNDRISYPPST) shows a compositional bias: polar residues. The stretch at 284–423 (RLSLSIQDIK…LEKSRSDEKV (140 aa)) forms a coiled coil. The Kinesin motor domain occupies 437–781 (NIRVFCRIRP…LRFAAKVNSC (345 aa)). Position 528–535 (528–535 (GQTGSGKT)) interacts with ATP.

Belongs to the TRAFAC class myosin-kinesin ATPase superfamily. Kinesin family. NCD subfamily.

It is found in the nucleus. The protein localises to the cytoplasm. The protein resides in the cytoskeleton. It localises to the spindle. Microtubule-dependent motor that is probably involved in microtubule organization in the mitotic spindle. The protein is Kinesin-related protein 2 (kif2) of Dictyostelium discoideum (Social amoeba).